Consider the following 432-residue polypeptide: Adenylosuccinate synthetase (432 aa).

Residues 13–19 (GDEGKGK) and 41–43 (GHT) contribute to the GTP site. Asp-14 (proton acceptor) is an active-site residue. 2 residues coordinate Mg(2+): Asp-14 and Gly-41. Residues 14–17 (DEGK), 39–42 (NAGH), Thr-130, Arg-144, Gln-225, Thr-240, and Arg-304 contribute to the IMP site. The active-site Proton donor is the His-42. 300-306 (AVTGRPR) contacts substrate. GTP-binding positions include Arg-306, 332 to 334 (KLD), and 415 to 417 (STG).

It belongs to the adenylosuccinate synthetase family. As to quaternary structure, homodimer. Mg(2+) serves as cofactor.

The protein localises to the cytoplasm. The catalysed reaction is IMP + L-aspartate + GTP = N(6)-(1,2-dicarboxyethyl)-AMP + GDP + phosphate + 2 H(+). It participates in purine metabolism; AMP biosynthesis via de novo pathway; AMP from IMP: step 1/2. Its function is as follows. Plays an important role in the de novo pathway of purine nucleotide biosynthesis. Catalyzes the first committed step in the biosynthesis of AMP from IMP. This chain is Adenylosuccinate synthetase, found in Mannheimia succiniciproducens (strain KCTC 0769BP / MBEL55E).